The primary structure comprises 296 residues: 5,10-methylenetetrahydrofolate reductase (296 aa).

Glu-28 (proton donor/acceptor) is an active-site residue. Thr-59 lines the NADH pocket. Positions 60, 62, 88, 118, 119, 120, 132, 152, 156, 159, 165, 168, 171, and 172 each coordinate FAD. (6S)-5-methyl-5,6,7,8-tetrahydrofolate is bound at residue Asp-120. Residue Gln-183 coordinates NADH. The (6S)-5-methyl-5,6,7,8-tetrahydrofolate site is built by Gln-183, Gln-219, and Arg-279.

Belongs to the methylenetetrahydrofolate reductase family. Homotetramer. FAD serves as cofactor.

The catalysed reaction is (6S)-5-methyl-5,6,7,8-tetrahydrofolate + NAD(+) = (6R)-5,10-methylene-5,6,7,8-tetrahydrofolate + NADH + H(+). Its pathway is one-carbon metabolism; tetrahydrofolate interconversion. It functions in the pathway amino-acid biosynthesis; L-methionine biosynthesis via de novo pathway. Catalyzes the NADH-dependent reduction of 5,10-methylenetetrahydrofolate to 5-methyltetrahydrofolate. Is required to provide the methyl group necessary for methionine synthetase to convert homocysteine to methionine; the methyl group is given by 5-methyltetrahydrofolate. Can also use NADPH as the reductant, but much less effectively than NADH. The sequence is that of 5,10-methylenetetrahydrofolate reductase from Escherichia coli (strain K12).